Here is a 193-residue protein sequence, read N- to C-terminus: Xanthine phosphoribosyltransferase (193 aa).

Xanthine-binding residues include Leu-20 and Asn-27. Position 129–133 (Ala-129–Ala-133) interacts with 5-phospho-alpha-D-ribose 1-diphosphate. Residue Lys-157 participates in xanthine binding.

The protein belongs to the purine/pyrimidine phosphoribosyltransferase family. Xpt subfamily. As to quaternary structure, homodimer.

The protein resides in the cytoplasm. The enzyme catalyses XMP + diphosphate = xanthine + 5-phospho-alpha-D-ribose 1-diphosphate. The protein operates within purine metabolism; XMP biosynthesis via salvage pathway; XMP from xanthine: step 1/1. Functionally, converts the preformed base xanthine, a product of nucleic acid breakdown, to xanthosine 5'-monophosphate (XMP), so it can be reused for RNA or DNA synthesis. The protein is Xanthine phosphoribosyltransferase of Bifidobacterium longum subsp. infantis (strain ATCC 15697 / DSM 20088 / JCM 1222 / NCTC 11817 / S12).